Reading from the N-terminus, the 198-residue chain is Glycerol-3-phosphate acyltransferase (198 aa).

The next 5 helical transmembrane spans lie at 2–22, 48–70, 75–97, 111–131, and 154–174; these read YAVL…AYIL, LGYK…AVLI, MGNT…PVFL, VVMT…VTVI, and IFWN…LAIF.

The protein belongs to the PlsY family. Probably interacts with PlsX.

It localises to the cell membrane. The enzyme catalyses an acyl phosphate + sn-glycerol 3-phosphate = a 1-acyl-sn-glycero-3-phosphate + phosphate. The protein operates within lipid metabolism; phospholipid metabolism. In terms of biological role, catalyzes the transfer of an acyl group from acyl-phosphate (acyl-PO(4)) to glycerol-3-phosphate (G3P) to form lysophosphatidic acid (LPA). This enzyme utilizes acyl-phosphate as fatty acyl donor, but not acyl-CoA or acyl-ACP. This Thermoanaerobacter pseudethanolicus (strain ATCC 33223 / 39E) (Clostridium thermohydrosulfuricum) protein is Glycerol-3-phosphate acyltransferase.